Consider the following 351-residue polypeptide: Dihydroorotate dehydrogenase (quinone) (351 aa).

FMN-binding positions include alanine 67–lysine 71 and threonine 91. Lysine 71 lines the substrate pocket. Substrate is bound at residue asparagine 116 to phenylalanine 120. 2 residues coordinate FMN: asparagine 145 and asparagine 178. Residue asparagine 178 coordinates substrate. The Nucleophile role is filled by serine 181. A substrate-binding site is contributed by asparagine 183. FMN-binding residues include lysine 214 and threonine 242. Asparagine 243–threonine 244 lines the substrate pocket. Residues glycine 262, glycine 291, and tyrosine 312 to serine 313 each bind FMN.

It belongs to the dihydroorotate dehydrogenase family. Type 2 subfamily. Monomer. It depends on FMN as a cofactor.

The protein resides in the cell membrane. It catalyses the reaction (S)-dihydroorotate + a quinone = orotate + a quinol. Its pathway is pyrimidine metabolism; UMP biosynthesis via de novo pathway; orotate from (S)-dihydroorotate (quinone route): step 1/1. In terms of biological role, catalyzes the conversion of dihydroorotate to orotate with quinone as electron acceptor. The protein is Dihydroorotate dehydrogenase (quinone) (pyrD) of Helicobacter pylori (strain ATCC 700392 / 26695) (Campylobacter pylori).